The primary structure comprises 120 residues: UPF0231 protein YacL (120 aa).

This sequence belongs to the UPF0231 family.

This is UPF0231 protein YacL from Escherichia coli O6:K15:H31 (strain 536 / UPEC).